The chain runs to 281 residues: Pantothenate synthetase (281 aa).

30 to 37 (MGYLHEGH) contacts ATP. His37 functions as the Proton donor in the catalytic mechanism. Gln61 contacts (R)-pantoate. Residue Gln61 participates in beta-alanine binding. 147–150 (GEKD) is an ATP binding site. Gln153 contacts (R)-pantoate. ATP-binding positions include Ile176 and 184–187 (KSSR).

This sequence belongs to the pantothenate synthetase family. As to quaternary structure, homodimer.

The protein resides in the cytoplasm. It catalyses the reaction (R)-pantoate + beta-alanine + ATP = (R)-pantothenate + AMP + diphosphate + H(+). It functions in the pathway cofactor biosynthesis; (R)-pantothenate biosynthesis; (R)-pantothenate from (R)-pantoate and beta-alanine: step 1/1. Functionally, catalyzes the condensation of pantoate with beta-alanine in an ATP-dependent reaction via a pantoyl-adenylate intermediate. This Clostridium botulinum (strain Okra / Type B1) protein is Pantothenate synthetase.